Reading from the N-terminus, the 294-residue chain is Enoyl-CoA hydratase domain-containing protein 3, mitochondrial (294 aa).

Residues 1 to 61 constitute a mitochondrion transit peptide; it reads MSWLRSCGER…IILNNPQQRN (61 aa).

The protein belongs to the enoyl-CoA hydratase/isomerase family.

The protein localises to the mitochondrion. In terms of biological role, may play a role in fatty acid biosynthesis and insulin sensitivity. This Xenopus laevis (African clawed frog) protein is Enoyl-CoA hydratase domain-containing protein 3, mitochondrial (echdc3).